Reading from the N-terminus, the 393-residue chain is NAD(P)H-quinone oxidoreductase subunit H, chloroplastic (393 aa).

This sequence belongs to the complex I 49 kDa subunit family. As to quaternary structure, NDH is composed of at least 16 different subunits, 5 of which are encoded in the nucleus.

Its subcellular location is the plastid. It localises to the chloroplast thylakoid membrane. It catalyses the reaction a plastoquinone + NADH + (n+1) H(+)(in) = a plastoquinol + NAD(+) + n H(+)(out). The catalysed reaction is a plastoquinone + NADPH + (n+1) H(+)(in) = a plastoquinol + NADP(+) + n H(+)(out). In terms of biological role, NDH shuttles electrons from NAD(P)H:plastoquinone, via FMN and iron-sulfur (Fe-S) centers, to quinones in the photosynthetic chain and possibly in a chloroplast respiratory chain. The immediate electron acceptor for the enzyme in this species is believed to be plastoquinone. Couples the redox reaction to proton translocation, and thus conserves the redox energy in a proton gradient. This Lolium perenne (Perennial ryegrass) protein is NAD(P)H-quinone oxidoreductase subunit H, chloroplastic.